The primary structure comprises 283 residues: tRNA pseudouridine synthase A (283 aa).

Residue Asp73 is the Nucleophile of the active site. The RNA binding stretch occupies residues 120 to 124 (FHARF). Tyr131 provides a ligand contact to substrate. Residues 181 to 185 (QCQSR) form an interaction with tRNA region.

Belongs to the tRNA pseudouridine synthase TruA family. In terms of assembly, homodimer.

The catalysed reaction is uridine(38/39/40) in tRNA = pseudouridine(38/39/40) in tRNA. In terms of biological role, formation of pseudouridine at positions 38, 39 and 40 in the anticodon stem and loop of transfer RNAs. The chain is tRNA pseudouridine synthase A from Pectobacterium atrosepticum (strain SCRI 1043 / ATCC BAA-672) (Erwinia carotovora subsp. atroseptica).